A 301-amino-acid polypeptide reads, in one-letter code: Multifunctional dioxygenase ausE (301 aa).

Residues R72 and Q127 each contribute to the substrate site. The Fe cation site is built by H130 and D132. A substrate-binding site is contributed by T167. Fe cation is bound at residue H214. Position 226 (R226) interacts with substrate.

This sequence belongs to the PhyH family. In terms of assembly, homodimer. Fe cation is required as a cofactor.

It catalyses the reaction preaustinoid A1 + 2-oxoglutarate + O2 = preaustinoid A2 + succinate + CO2 + H2O. The catalysed reaction is preaustinoid A2 + 2-oxoglutarate + O2 = preaustinoid A3 + succinate + CO2 + H2O. It carries out the reaction berkeleyone A + 2-oxoglutarate + O2 = preaustinoid A + succinate + CO2 + H2O. It participates in secondary metabolite biosynthesis; terpenoid biosynthesis. In terms of biological role, multifunctional dioxygenase; part of the gene cluster A that mediates the biosynthesis of the fungal meroterpenoid acetoxydehydroaustin. The first step of the pathway is the synthesis of 3,5-dimethylorsellinic acid by the polyketide synthase ausA. 3,5-dimethylorsellinic acid is then prenylated by the polyprenyl transferase ausN. Further epoxidation by the FAD-dependent monooxygenase ausM and cyclization by the probable terpene cyclase ausL lead to the formation of protoaustinoid A. Protoaustinoid A is then oxidized to spiro-lactone preaustinoid A3 by the combined action of the FAD-binding monooxygenases ausB and ausC, and the dioxygenase ausE. Acid-catalyzed keto-rearrangement and ring contraction of the tetraketide portion of preaustinoid A3 by ausJ lead to the formation of preaustinoid A4. The aldo-keto reductase ausK, with the help of ausH, is involved in the next step by transforming preaustinoid A4 into isoaustinone which is in turn hydroxylated by the P450 monooxygenase ausI to form austinolide. The cytochrome P450 monooxygenase ausG then modifies austinolide to austinol. Austinol is further acetylated to austin by the O-acetyltransferase ausP, which spontaneously changes to dehydroaustin. The cytochrome P450 monooxygenase then converts dehydroaustin is into 7-dehydrodehydroaustin. The hydroxylation catalyzed by ausR permits the second O-acetyltransferase ausQ to add an additional acetyl group to the molecule, leading to the formation of acetoxydehydroaustin. Due to genetic rearrangements of the clusters and the subsequent loss of some enzymes, the end product of the Penicillium brasilianum austinoid biosynthesis clusters is acetoxydehydroaustin. This is Multifunctional dioxygenase ausE from Penicillium brasilianum.